Consider the following 189-residue polypeptide: Transmembrane protein 229b (189 aa).

The Cytoplasmic segment spans residues 1–17 (MATTVTPEPLTALSRWY). Residues 18–38 (LYAIHGYFCEVMFTAAWEFVV) form a helical membrane-spanning segment. Over 39–43 (NCNWK) the chain is Extracellular. A helical transmembrane segment spans residues 44–64 (FPGVTSVWALFIYGTCILIVE). Over 65 to 75 (RMYLCLKDRCN) the chain is Cytoplasmic. A helical transmembrane segment spans residues 76–96 (VLLRCIIYTLWTYFWEFGTGF). Residues 97–114 (LLRQFNACPWDYSEFKYN) lie on the Extracellular side of the membrane. The chain crosses the membrane as a helical span at residues 115–135 (FMGLITAEYAVPWFCASFIVE). At 136–189 (RLVIRNTLRLRFDEVAESGQAEERLDRGGGGRGGRRGRGARAGATSANGYVKVD) the chain is on the cytoplasmic side. Positions 158 to 189 (ERLDRGGGGRGGRRGRGARAGATSANGYVKVD) are disordered.

This sequence belongs to the TMEM229 family.

It localises to the membrane. The polypeptide is Transmembrane protein 229b (tmem229b) (Danio rerio (Zebrafish)).